A 153-amino-acid polypeptide reads, in one-letter code: 6,7-dimethyl-8-ribityllumazine synthase (153 aa).

5-amino-6-(D-ribitylamino)uracil-binding positions include Phe22, 56-58 (AFE), and 80-82 (TVI). 85–86 (ST) lines the (2S)-2-hydroxy-3-oxobutyl phosphate pocket. Residue His88 is the Proton donor of the active site. 5-amino-6-(D-ribitylamino)uracil is bound at residue Phe113. Arg127 contributes to the (2S)-2-hydroxy-3-oxobutyl phosphate binding site.

The protein belongs to the DMRL synthase family. Forms an icosahedral capsid composed of 60 subunits, arranged as a dodecamer of pentamers.

It catalyses the reaction (2S)-2-hydroxy-3-oxobutyl phosphate + 5-amino-6-(D-ribitylamino)uracil = 6,7-dimethyl-8-(1-D-ribityl)lumazine + phosphate + 2 H2O + H(+). Its pathway is cofactor biosynthesis; riboflavin biosynthesis; riboflavin from 2-hydroxy-3-oxobutyl phosphate and 5-amino-6-(D-ribitylamino)uracil: step 1/2. In terms of biological role, catalyzes the formation of 6,7-dimethyl-8-ribityllumazine by condensation of 5-amino-6-(D-ribitylamino)uracil with 3,4-dihydroxy-2-butanone 4-phosphate. This is the penultimate step in the biosynthesis of riboflavin. The sequence is that of 6,7-dimethyl-8-ribityllumazine synthase from Haemophilus ducreyi (strain 35000HP / ATCC 700724).